A 325-amino-acid polypeptide reads, in one-letter code: Probable cell division protein WhiA (325 aa).

A DNA-binding region (H-T-H motif) is located at residues 273–306 (SLEELGALADPPLTKDAVAGRIRRLLALADKRAN).

It belongs to the WhiA family.

In terms of biological role, involved in cell division and chromosome segregation. This chain is Probable cell division protein WhiA, found in Parafrankia sp. (strain EAN1pec).